The primary structure comprises 279 residues: Ribosomal RNA small subunit methyltransferase I (279 aa).

Belongs to the methyltransferase superfamily. RsmI family.

The protein resides in the cytoplasm. The enzyme catalyses cytidine(1402) in 16S rRNA + S-adenosyl-L-methionine = 2'-O-methylcytidine(1402) in 16S rRNA + S-adenosyl-L-homocysteine + H(+). Its function is as follows. Catalyzes the 2'-O-methylation of the ribose of cytidine 1402 (C1402) in 16S rRNA. The chain is Ribosomal RNA small subunit methyltransferase I from Synechocystis sp. (strain ATCC 27184 / PCC 6803 / Kazusa).